A 135-amino-acid polypeptide reads, in one-letter code: Small ribosomal subunit protein uS11 (135 aa).

Residues 1 to 20 form a disordered region; that stretch reads MGRQRQQRSRGSRSRRRVRK.

The protein belongs to the universal ribosomal protein uS11 family. In terms of assembly, part of the 30S ribosomal subunit. Interacts with proteins S7 and S18. Binds to IF-3.

Functionally, located on the platform of the 30S subunit, it bridges several disparate RNA helices of the 16S rRNA. Forms part of the Shine-Dalgarno cleft in the 70S ribosome. In Rubrobacter xylanophilus (strain DSM 9941 / JCM 11954 / NBRC 16129 / PRD-1), this protein is Small ribosomal subunit protein uS11.